A 160-amino-acid chain; its full sequence is Inorganic pyrophosphatase (160 aa).

Residues K16, R28, and Y40 each contribute to the substrate site. Residues D50, D55, and D87 each contribute to the Mg(2+) site. Y126 contacts substrate.

The protein belongs to the PPase family. In terms of assembly, homohexamer. Mg(2+) is required as a cofactor.

It localises to the cytoplasm. It carries out the reaction diphosphate + H2O = 2 phosphate + H(+). Functionally, catalyzes the hydrolysis of inorganic pyrophosphate (PPi) forming two phosphate ions. The chain is Inorganic pyrophosphatase from Nanoarchaeum equitans (strain Kin4-M).